The sequence spans 271 residues: Ferric vulnibactin reductase VuuB (271 aa).

Residues 8–131 (VYPMLLDFVR…IGPAGPDPLI (124 aa)) enclose the FAD-binding FR-type domain.

Belongs to the SIP oxidoreductase family. In terms of assembly, monomer. Requires FAD as cofactor.

Its subcellular location is the cytoplasm. The enzyme catalyses 2 a Fe(II)-siderophore + NAD(+) + H(+) = 2 a Fe(III)-siderophore + NADH. Functionally, ferric-siderophore reductase involved in iron removal from the siderophores after their transport into the cell. Acts as a major ferric-vulnibactin reductase catalyzing the reduction of Fe(3+)-vulnibactin, a catecholate siderophore synthesized by V.vulnificus. The chain is Ferric vulnibactin reductase VuuB from Vibrio vulnificus (strain CMCP6).